A 62-amino-acid chain; its full sequence is Large ribosomal subunit protein bL28 (62 aa).

This sequence belongs to the bacterial ribosomal protein bL28 family.

In Bacillus velezensis (strain DSM 23117 / BGSC 10A6 / LMG 26770 / FZB42) (Bacillus amyloliquefaciens subsp. plantarum), this protein is Large ribosomal subunit protein bL28.